A 1480-amino-acid chain; its full sequence is C-type mannose receptor 2 (1480 aa).

Positions 1–30 are cleaved as a signal peptide; the sequence is MGPIRPALAPWPRHLLRCVLLLGGLRLGHP. At 31-1413 the chain is on the extracellular side; sequence ADSAAALLEP…SAALPENPVA (1383 aa). One can recognise a Ricin B-type lectin domain in the interval 40–166; the sequence is PDVFLIFSQG…WNIYGSEEDL (127 aa). 2 disulfides stabilise this stretch: Cys-53-Cys-67 and Cys-92-Cys-111. N-linked (GlcNAc...) asparagine glycans are attached at residues Asn-101 and Asn-139. A Fibronectin type-II domain is found at 181 to 229; that stretch reads SHGKPCTIPFKYDNQWFHGCTSTGREDGHLWCATTQDYGKDERWGFCPI. Intrachain disulfides connect Cys-186–Cys-212, Cys-200–Cys-227, Cys-265–Cys-358, and Cys-334–Cys-350. Residues 243–359 enclose the C-type lectin 1 domain; the sequence is LTDSCYQFNF…CSIALPYVCK (117 aa). Asn-363 is a glycosylation site (N-linked (GlcNAc...) asparagine). C-type lectin domains follow at residues 388–504, 527–643, 677–808, 831–950, 978–1106, 1131–1242, and 1271–1391; these read FQGH…SICK, HSPS…RYIC, KLRH…WICK, FQEA…YICK, FLNK…GFIC, YLNR…GAVC, and FREH…GVVC. Disulfide bonds link Cys-409-Cys-503, Cys-480-Cys-495, Cys-617-Cys-634, Cys-703-Cys-807, Cys-784-Cys-799, Cys-852-Cys-949, and Cys-926-Cys-941. N-linked (GlcNAc...) asparagine glycosylation occurs at Asn-1028. An intrachain disulfide couples Cys-1077 to Cys-1097. Lys-1141 is covalently cross-linked (Glycyl lysine isopeptide (Lys-Gly) (interchain with G-Cter in SUMO1)). Cys-1219 and Cys-1233 are joined by a disulfide. Asn-1348 is a glycosylation site (N-linked (GlcNAc...) asparagine). A disulfide bridge connects residues Cys-1367 and Cys-1382. Residues 1414–1434 form a helical membrane-spanning segment; sequence LVVVLTAAVLLLLALLTGALI. Residues 1435 to 1480 are Cytoplasmic-facing; the sequence is LYRRRQSAERGSFEGARYSRSSRSGPAEATEKNILVSDMEMNEQQE. The segment at 1446–1480 is disordered; that stretch reads SFEGARYSRSSRSGPAEATEKNILVSDMEMNEQQE.

In terms of assembly, interacts directly with PLAUR/UPAR and PLAU/pro-UPA to form a tri-molecular complex. Interacts with collagen V. Interacts with C-terminal region of type I collagen/COL1A1. In terms of processing, N-glycosylated. Post-translationally, phosphorylated.

The protein resides in the cell membrane. Its function is as follows. May play a role as endocytotic lectin receptor displaying calcium-dependent lectin activity. Internalizes glycosylated ligands from the extracellular space for release in an endosomal compartment via clathrin-mediated endocytosis. May be involved in plasminogen activation system controlling the extracellular level of PLAUR/PLAU, and thus may regulate protease activity at the cell surface. May contribute to cellular uptake, remodeling and degradation of extracellular collagen matrices. May participate in remodeling of extracellular matrix cooperating with the matrix metalloproteinases (MMPs) secreted by hepatic stellate cells. May mediate endocytosis of partially degraded collagens and glycoproteins produced in the extracellular matrix by MMPs. The sequence is that of C-type mannose receptor 2 (Mrc2) from Rattus norvegicus (Rat).